Here is a 353-residue protein sequence, read N- to C-terminus: Photosystem II D2 protein (353 aa).

Position 2 is an N-acetylthreonine (threonine 2). The residue at position 2 (threonine 2) is a Phosphothreonine. A helical transmembrane segment spans residues 41–61; the sequence is CAYFALGGWFTGTTFVTSWYT. Residue histidine 118 participates in chlorophyll a binding. The chain crosses the membrane as a helical span at residues 125–141; it reads GFMLRQFELARSVQLRP. The pheophytin a site is built by glutamine 130 and asparagine 143. The helical transmembrane segment at 153 to 166 threads the bilayer; that stretch reads VFVSVFLIYPLGQS. A chlorophyll a-binding site is contributed by histidine 198. The helical transmembrane segment at 208–228 threads the bilayer; sequence AALLCAIHGATVENTLFEDGD. Residues histidine 215 and phenylalanine 262 each coordinate a plastoquinone. Fe cation is bound at residue histidine 215. Fe cation is bound at residue histidine 269. A helical transmembrane segment spans residues 279–295; it reads GLWMSALGVVGLALNLR.

It belongs to the reaction center PufL/M/PsbA/D family. In terms of assembly, PSII is composed of 1 copy each of membrane proteins PsbA, PsbB, PsbC, PsbD, PsbE, PsbF, PsbH, PsbI, PsbJ, PsbK, PsbL, PsbM, PsbT, PsbX, PsbY, PsbZ, Psb30/Ycf12, at least 3 peripheral proteins of the oxygen-evolving complex and a large number of cofactors. It forms dimeric complexes. The cofactor is The D1/D2 heterodimer binds P680, chlorophylls that are the primary electron donor of PSII, and subsequent electron acceptors. It shares a non-heme iron and each subunit binds pheophytin, quinone, additional chlorophylls, carotenoids and lipids. There is also a Cl(-1) ion associated with D1 and D2, which is required for oxygen evolution. The PSII complex binds additional chlorophylls, carotenoids and specific lipids..

The protein localises to the plastid. It localises to the chloroplast thylakoid membrane. The enzyme catalyses 2 a plastoquinone + 4 hnu + 2 H2O = 2 a plastoquinol + O2. Photosystem II (PSII) is a light-driven water:plastoquinone oxidoreductase that uses light energy to abstract electrons from H(2)O, generating O(2) and a proton gradient subsequently used for ATP formation. It consists of a core antenna complex that captures photons, and an electron transfer chain that converts photonic excitation into a charge separation. The D1/D2 (PsbA/PsbD) reaction center heterodimer binds P680, the primary electron donor of PSII as well as several subsequent electron acceptors. D2 is needed for assembly of a stable PSII complex. This Barbarea verna (Land cress) protein is Photosystem II D2 protein.